Here is a 648-residue protein sequence, read N- to C-terminus: Serine/threonine-protein kinase PrkC (648 aa).

The Cytoplasmic portion of the chain corresponds to 1–330; that stretch reads MLIGKRISGR…KKNGKRKKWP (330 aa). Residues 11 to 271 form the Protein kinase domain; that stretch reads YQILRVIGGG…DMEADIKTAF (261 aa). Residues 17 to 25 and Lys40 contribute to the ATP site; that span reads IGGGGMANV. Asp134 acts as the Proton acceptor in catalysis. Phosphothreonine; by autocatalysis is present on residues Thr162, Thr163, Thr165, and Thr167. Phosphoserine; by autocatalysis is present on Ser214. A phosphothreonine; by autocatalysis mark is found at Thr290, Thr313, and Thr320. The helical transmembrane segment at 331–351 threads the bilayer; that stretch reads WVLLTICLVFITAGILAVTVF. Topologically, residues 352–648 are extracellular; it reads PSLFMPKDVK…YKTIEYPKDE (297 aa). 3 consecutive PASTA domains span residues 356–424, 425–492, and 493–559; these read MPKD…YKST, GKAK…TVSI, and GPED…TFSL.

Belongs to the protein kinase superfamily. Ser/Thr protein kinase family. As to quaternary structure, homodimer. In terms of processing, autophosphorylation on threonine residue(s) and serine residue considerably increases the kinase activity of the protein. Dephosphorylated in vitro by PrpC.

Its subcellular location is the spore membrane. The enzyme catalyses L-seryl-[protein] + ATP = O-phospho-L-seryl-[protein] + ADP + H(+). It catalyses the reaction L-threonyl-[protein] + ATP = O-phospho-L-threonyl-[protein] + ADP + H(+). Bryostatin activates PrkC activity and induces germination, whereas staurosporine inhibits PrkC and significantly reduced peptidoglycan-dependent germination. Kinase activity of isolated N-terminus stimulated by poly-L-lysine or myelin basic protein. Protein kinase that is responsible for triggering spore germination in response to muropeptides, signaling bacteria to exit dormancy. PrkC is thus a germination receptor that binds peptidoglycan fragments containing m-Dpm (meso-diaminopimelate), which act as spore germinants. Autophosphorylates and phosphorylates EF-G (elongation factor G, fusA); the latter modification is likely necessary for germination in response to peptidoglycan. Another group did not detect phosphorylation of EF-G. PrkC is a substrate in vitro of the cotranscribed phosphatase PrpC, which suggests that they form a functional couple in vivo. Might also be involved in sporulation and biofilm formation. Does not seem to be involved in stress response. This chain is Serine/threonine-protein kinase PrkC (prkC), found in Bacillus subtilis (strain 168).